Reading from the N-terminus, the 400-residue chain is 3-phenylpropionate/cinnamic acid dioxygenase ferredoxin--NAD(+) reductase component (400 aa).

5–36 (TIIIVGGGQAAAMAAASLRQQGFTGELHLFSD) is an FAD binding site. 146–174 (SVVIVGAGTIGLELAASATQRRCKVTVIE) serves as a coordination point for NAD(+).

Belongs to the bacterial ring-hydroxylating dioxygenase ferredoxin reductase family. This dioxygenase system consists of four proteins: the two subunits of the hydroxylase component (HcaE and HcaF), a ferredoxin (HcaC) and a ferredoxin reductase (HcaD). FAD serves as cofactor.

It catalyses the reaction 2 reduced [2Fe-2S]-[ferredoxin] + NAD(+) + H(+) = 2 oxidized [2Fe-2S]-[ferredoxin] + NADH. It functions in the pathway aromatic compound metabolism; 3-phenylpropanoate degradation. Its function is as follows. Part of the multicomponent 3-phenylpropionate dioxygenase, that converts 3-phenylpropionic acid (PP) and cinnamic acid (CI) into 3-phenylpropionate-dihydrodiol (PP-dihydrodiol) and cinnamic acid-dihydrodiol (CI-dihydrodiol), respectively. This Escherichia coli (strain 55989 / EAEC) protein is 3-phenylpropionate/cinnamic acid dioxygenase ferredoxin--NAD(+) reductase component.